The primary structure comprises 648 residues: Phosphatidylinositol-3,5-bisphosphate 3-phosphatase MTMR14 (648 aa).

The span at 1 to 19 shows a compositional bias: low complexity; sequence MAGARAAAAASAGSTASSG. The disordered stretch occupies residues 1-27; the sequence is MAGARAAAAASAGSTASSGSPPPQEPG. Lys193 carries the N6-acetyllysine modification. Residues Asn225 and Asn240 are each glycosylated (N-linked (GlcNAc...) asparagine). The active-site Phosphocysteine intermediate is the Cys329. A 1,2-diacyl-sn-glycero-3-phospho-(1D-myo-inositol-3,5-bisphosphate)-binding residues include Gly332, Trp333, Asp334, Arg335, and Arg381. A 1,2-diacyl-sn-glycero-3-phospho-(1D-myo-inositol-3-phosphate) contacts are provided by Gly332, Trp333, Asp334, Arg335, and Arg381. The segment at 471–544 is disordered; it reads PTQAAWRKSH…PRSVDHPLPG (74 aa). Residues 494-506 are compositionally biased toward basic and acidic residues; sequence PSEERLPSHHGLT. A Phosphoserine modification is found at Ser516. N-linked (GlcNAc...) asparagine glycosylation is present at Asn517. A phosphoserine mark is found at Ser528, Ser578, and Ser622. Arg636 bears the Omega-N-methylarginine mark.

This sequence belongs to the protein-tyrosine phosphatase family. Non-receptor class myotubularin subfamily.

It is found in the cytoplasm. The enzyme catalyses a 1,2-diacyl-sn-glycero-3-phospho-(1D-myo-inositol-3,5-bisphosphate) + H2O = a 1,2-diacyl-sn-glycero-3-phospho-(1D-myo-inositol-5-phosphate) + phosphate. The catalysed reaction is a 1,2-diacyl-sn-glycero-3-phospho-(1D-myo-inositol-3-phosphate) + H2O = a 1,2-diacyl-sn-glycero-3-phospho-(1D-myo-inositol) + phosphate. Lipid phosphatase that specifically dephosphorylates the D-3 position of phosphatidylinositol 3-phosphate and phosphatidylinositol 3,5-bisphosphate, generating phosphatidylinositol and phosphatidylinositol 5-phosphate. The sequence is that of Phosphatidylinositol-3,5-bisphosphate 3-phosphatase MTMR14 from Mus musculus (Mouse).